A 445-amino-acid polypeptide reads, in one-letter code: Glycerophosphocholine choline phosphodiesterase ENPP6 (445 aa).

The first 22 residues, 1–22 (MAGKLGVLLLALVLSLAQPASA), serve as a signal peptide directing secretion. 3 residues coordinate substrate: D32, S71, and N92. Zn(2+) contacts are provided by D32 and S71. The active-site Nucleophile is S71. S71 is modified (phosphoserine). N-linked (GlcNAc...) asparagine glycosylation is found at N100 and N118. The cysteines at positions 142 and 154 are disulfide-linked. D193 contacts substrate. Residues D193, H197, D240, and H241 each contribute to the Zn(2+) site. H241 serves as a coordination point for substrate. A glycan (N-linked (GlcNAc...) asparagine) is linked at N341. H356 lines the substrate pocket. Position 356 (H356) interacts with Zn(2+). Residue N406 is glycosylated (N-linked (GlcNAc...) asparagine). S421 carries the GPI-anchor amidated serine lipid modification. Positions 422–445 (SAPGAPPCACALVTVLLVLLAILA) are cleaved as a propeptide — removed in mature form.

This sequence belongs to the nucleotide pyrophosphatase/phosphodiesterase family. Homodimer; disulfide-linked. Homotetramer. Requires Zn(2+) as cofactor.

Its subcellular location is the cell membrane. The enzyme catalyses sn-glycerol 3-phosphocholine + H2O = phosphocholine + glycerol + H(+). It carries out the reaction a 1-acyl-sn-glycero-3-phosphocholine + H2O = a 1-acyl-sn-glycerol + phosphocholine + H(+). It catalyses the reaction a 1-O-alkyl-sn-glycero-3-phosphocholine + H2O = a 1-O-alkyl-sn-glycerol + phosphocholine + H(+). The catalysed reaction is 1-dodecanoyl-sn-glycero-3-phosphocholine + H2O = 1-dodecanoyl-sn-glycerol + phosphocholine + H(+). The enzyme catalyses 1-hexadecanoyl-sn-glycero-3-phosphocholine + H2O = 1-hexadecanoyl-sn-glycerol + phosphocholine + H(+). It carries out the reaction 1-(5Z,8Z,11Z,14Z-eicosatetraenoyl)-sn-glycero-3-phosphocholine + H2O = 1-(5Z,8Z,11Z,14Z-eicosatetraenoyl)-sn-glycerol + phosphocholine + H(+). It catalyses the reaction 1-tetradecanoyl-sn-glycero-3-phosphocholine + H2O = 1-tetradecanoyl-sn-glycerol + phosphocholine + H(+). The catalysed reaction is sphing-4-enine-phosphocholine + H2O = sphing-4-enine + phosphocholine + H(+). The enzyme catalyses 1-(9Z-octadecenoyl)-sn-glycero-3-phosphocholine + H2O = 1-(9Z-octadecenoyl)-sn-glycerol + phosphocholine + H(+). It carries out the reaction 1-(9Z,12Z)-octadecadienoyl-sn-glycero-3-phosphocholine + H2O = 1-(9Z,12Z-octadecadienoyl)-sn-glycerol + phosphocholine + H(+). It catalyses the reaction glycero-2-phosphocholine + H2O = phosphocholine + glycerol + H(+). Inhibited by EDTA and EGTA in vitro. In terms of biological role, choline-specific glycerophosphodiesterase that hydrolyzes glycerophosphocholine (GPC) and lysophosphatidylcholine (LPC) and contributes to supplying choline to the cells. Has a preference for LPC with short (12:0 and 14:0) or polyunsaturated (18:2 and 20:4) fatty acids. In vitro, hydrolyzes only choline-containing lysophospholipids, such as sphingosylphosphorylcholine (SPC), platelet-activating factor (PAF) and lysoPAF, but not other lysophospholipids. The polypeptide is Glycerophosphocholine choline phosphodiesterase ENPP6 (Bos taurus (Bovine)).